The following is a 419-amino-acid chain: Alpha-galactosidase A (419 aa).

The signal sequence occupies residues 1–31 (MKLLSRDTRLVCELALCPLALVFWSILGVRA). Intrachain disulfides connect Cys-52–Cys-94 and Cys-56–Cys-63. Residue Asn-139 is glycosylated (N-linked (GlcNAc...) asparagine). Cysteines 142 and 172 form a disulfide. Residue Asp-170 is the Nucleophile of the active site. Residue Tyr-186 is modified to Phosphotyrosine. Residue Asn-192 is glycosylated (N-linked (GlcNAc...) asparagine). Residues Cys-202 and Cys-223 are joined by a disulfide bond. 203–207 (EWPLY) is a binding site for substrate. N-linked (GlcNAc...) asparagine glycosylation occurs at Asn-215. Asp-231 acts as the Proton donor in catalysis. Cys-378 and Cys-382 are joined by a disulfide.

This sequence belongs to the glycosyl hydrolase 27 family. As to quaternary structure, homodimer.

It localises to the lysosome. The enzyme catalyses Hydrolysis of terminal, non-reducing alpha-D-galactose residues in alpha-D-galactosides, including galactose oligosaccharides, galactomannans and galactolipids.. It carries out the reaction a globoside Gb3Cer (d18:1(4E)) + H2O = a beta-D-Gal-(1-&gt;4)-beta-D-Glc-(1&lt;-&gt;1)-Cer(d18:1(4E)) + D-galactose. It catalyses the reaction a globoside Gb3Cer + H2O = a beta-D-galactosyl-(1-&gt;4)-beta-D-glucosyl-(1&lt;-&gt;1)-ceramide + D-galactose. With respect to regulation, galactosylgalactosylglucosylceramidase activity is stimulated by saposin B and ammonium chloride. Functionally, catalyzes the hydrolysis of glycosphingolipids and participates in their degradation in the lysosome. This chain is Alpha-galactosidase A, found in Mus musculus (Mouse).